A 221-amino-acid polypeptide reads, in one-letter code: Tetraspanin-2 (221 aa).

Topologically, residues 1–13 (MGRFRGGLRCIKY) are cytoplasmic. The chain crosses the membrane as a helical span at residues 14 to 34 (LLLGFNLLFWLAGSAVIAFGL). Over 35-54 (WFRFGGTMKDLSSEDKSPEY) the chain is Extracellular. A helical transmembrane segment spans residues 55–75 (FYVGLYVLVGAGALMMTVGFF). The Cytoplasmic segment spans residues 76-90 (GCCGAMRESQCVLGS). Residues 91–111 (FFTCLLVIFAAEVTTGVFAFI) traverse the membrane as a helical segment. The Extracellular segment spans residues 112-188 (GKDVAIRHVQ…ETVISAKLQL (77 aa)). Residue Asn139 is glycosylated (N-linked (GlcNAc...) asparagine). A helical membrane pass occupies residues 189-209 (IGIVGIGIAGLTIFGMIFSMV). Residues 210–221 (LCCAIRNSRDVI) lie on the Cytoplasmic side of the membrane.

The protein belongs to the tetraspanin (TM4SF) family.

Its subcellular location is the membrane. Its function is as follows. May play a role in signalling in oligodendrocytes in the early stages of their terminal differentiation into myelin-forming glia and may also function in stabilizing the mature sheath. This chain is Tetraspanin-2 (Tspan2), found in Mus musculus (Mouse).